A 396-amino-acid chain; its full sequence is Alanine racemase (396 aa).

K46 (proton acceptor; specific for D-alanine) is an active-site residue. K46 carries the N6-(pyridoxal phosphate)lysine modification. R145 is a binding site for substrate. Y280 functions as the Proton acceptor; specific for L-alanine in the catalytic mechanism. M328 lines the substrate pocket.

Belongs to the alanine racemase family. It depends on pyridoxal 5'-phosphate as a cofactor.

It catalyses the reaction L-alanine = D-alanine. Its pathway is amino-acid biosynthesis; D-alanine biosynthesis; D-alanine from L-alanine: step 1/1. In terms of biological role, catalyzes the interconversion of L-alanine and D-alanine. May also act on other amino acids. The protein is Alanine racemase (alr) of Brucella suis (strain ATCC 23445 / NCTC 10510).